Consider the following 289-residue polypeptide: G1/S-specific cyclin-D2 (289 aa).

The Cyclin N-terminal domain maps to 26-151 (VLQNLLTIEE…VVLGKLKWNL (126 aa)). Positions 264-289 (DQGDGSKSEDELDQASTPTDVRDIDL) are disordered. Ser271 bears the Phosphoserine mark. The residue at position 280 (Thr280) is a Phosphothreonine.

It belongs to the cyclin family. Cyclin D subfamily. In terms of assembly, interacts with either CDK4 or CDK6 protein kinase to form a serine/threonine kinase holoenzyme complex. The cyclin subunit imparts substrate specificity to the complex. Post-translationally, phosphorylation at Thr-280 by MAP kinases is required for ubiquitination and degradation by the DCX(AMBRA1) complex. Ubiquitinated by the DCX(AMBRA1) complex during the transition from G1 to S cell phase, leading to its degradation: ubiquitination is dependent on Thr-280 phosphorylation. The DCX(AMBRA1) complex represents the major regulator of CCND2 stability during the G1/S transition. Polyubiquitinated by the SCF(FBXL2) complex, leading to proteasomal degradation.

The protein localises to the nucleus. It localises to the cytoplasm. It is found in the nucleus membrane. Its function is as follows. Regulatory component of the cyclin D2-CDK4 (DC) complex that phosphorylates and inhibits members of the retinoblastoma (RB) protein family including RB1 and regulates the cell-cycle during G(1)/S transition. Phosphorylation of RB1 allows dissociation of the transcription factor E2F from the RB/E2F complex and the subsequent transcription of E2F target genes which are responsible for the progression through the G(1) phase. Hypophosphorylates RB1 in early G(1) phase. Cyclin D-CDK4 complexes are major integrators of various mitogenenic and antimitogenic signals. The protein is G1/S-specific cyclin-D2 (CCND2) of Bos taurus (Bovine).